A 766-amino-acid chain; its full sequence is Single-minded homolog 1 (766 aa).

Positions 1 to 53 constitute a bHLH domain; the sequence is MKEKSKNAARTRREKENSEFYELAKLLPLPSAITSQLDKASIIRLTTSYLKMR. PAS domains are found at residues 77-147 and 218-288; these read GREL…QPYH and PPSA…LVKG. One can recognise a PAC domain in the interval 292-335; the sequence is TKYYRFLAKHGGWVWVQSYATIVHNSRSSRPHCIVSVNYVLTDT. The Single-minded C-terminal domain maps to 336-766; the sequence is EYKGLQLSLD…GTSVIITNGS (431 aa). Residues 353–365 show a composition bias toward polar residues; sequence AFSYTSSSTPTMT. Disordered regions lie at residues 353–431 and 528–563; these read AFSY…SQHD and WDEDSVVSSPDPGSASESGDRYRTEQYQSSPHEPSK. The Nuclear localization signal motif lies at 368-387; sequence RKGAKSRLSSSKSKSRTSPY. The span at 373-385 shows a compositional bias: low complexity; sequence SRLSSSKSKSRTS. A compositionally biased stretch (basic and acidic residues) spans 394–404; it reads HTERSESDHDS.

As to quaternary structure, efficient DNA binding requires dimerization with another bHLH protein. Heterodimer; forms a heterodimer with ARNT, ARNT2.

The protein localises to the nucleus. Its function is as follows. Transcriptional factor that may have pleiotropic effects during embryogenesis and in the adult. This is Single-minded homolog 1 (SIM1) from Homo sapiens (Human).